Reading from the N-terminus, the 406-residue chain is Kelch domain-containing protein 2 (406 aa).

6 Kelch repeats span residues 31–85 (ERSG…NTEG), 92–136 (SGSC…ERID), 148–207 (LGVW…AWSQ), 221–259 (HACATVGNKGFVFGGRYRDARMNDLHYLNLDTWEWNELI), 271–311 (HSLT…IQFN), and 322–359 (HTACASDEGEVIVFGGCANNLLVHHRAAHSNEVLIFSV).

As to quaternary structure, component of a CRL2(KLHDC2) E3 ubiquitin-protein ligase complex, also named ECS(KLHDC2) complex, composed of CUL2, Elongin BC (ELOB and ELOC), RBX1 and substrate-specific adapter KLHDC2. May form oligomers as a KLHDC2-ELOB-ELOC complex; this interaction is autoinhibitory for the E3 ligase complex as the substrate-binding site of KLHDC2 is blocked in the oligomer. Interacts with CREB3; interaction is direct and specific as it does not interact with CREB1, ATF4, ATF6, JUN, FOS, CEBPA or herpes simplex virus transactivator VP16. Post-translationally, autoubiquitinated by the CRL2(KLHDC2) E3 ligase complex.

Its subcellular location is the nucleus. Its pathway is protein modification; protein ubiquitination. Its function is as follows. Substrate-recognition component of a Cul2-RING (CRL2) E3 ubiquitin-protein ligase complex of the DesCEND (destruction via C-end degrons) pathway, which recognizes a C-degron located at the extreme C terminus of target proteins, leading to their ubiquitination and degradation. The C-degron recognized by the DesCEND pathway is usually a motif of less than ten residues and can be present in full-length proteins, truncated proteins or proteolytically cleaved forms. The CRL2(KLHDC2) complex specifically recognizes proteins with a diglycine (Gly-Gly) at the C-terminus, leading to their ubiquitination and degradation. The CRL2(KLHDC2) complex mediates ubiquitination and degradation of truncated SELENOK and SELENOS selenoproteins produced by failed UGA/Sec decoding, which end with a diglycine. The CRL2(KLHDC2) complex also recognizes proteolytically cleaved proteins ending with Gly-Gly, such as the N-terminal fragment of USP1, leading to their degradation. May also act as an indirect repressor of CREB3-mediated transcription by interfering with CREB3-DNA-binding. The sequence is that of Kelch domain-containing protein 2 from Mus musculus (Mouse).